The following is a 714-amino-acid chain: Palmitoyltransferase ZDHHC5 (714 aa).

At 1–13 the chain is on the cytoplasmic side; that stretch reads MPAESAKRFKPSK. The chain crosses the membrane as a helical span at residues 14 to 34; the sequence is YVPVSAAAIFLVGATTLFFAF. The Extracellular portion of the chain corresponds to 35-52; that stretch reads TCPGLSLSVSPAVPVYNA. Residues 53–73 form a helical membrane-spanning segment; it reads VVFLFVLANFSMATFMDPGVF. At 74–148 the chain is on the cytoplasmic side; sequence PRAEEDEDKE…NCIGRRNYRY (75 aa). Tyr-91 carries the phosphotyrosine modification. The 51-residue stretch at 104-154 folds into the DHHC domain; sequence KWCATCRFYRPPRCSHCSVCDNCVEEFDHHCPWVNNCIGRRNYRYFFLFLL. Catalysis depends on Cys-134, which acts as the S-palmitoyl cysteine intermediate. The chain crosses the membrane as a helical span at residues 149–169; the sequence is FFLFLLSLTAHITGVFGFGLL. Over 170-191 the chain is Extracellular; sequence YVLYHMEELSGVRTAVTMAVMC. A helical transmembrane segment spans residues 192 to 212; that stretch reads VAGLFFIPVAGLTGFHVVLVA. Over 213-714 the chain is Cytoplasmic; it reads RGRTTNEQVT…VGGTTYEISV (502 aa). Ser-247 carries the post-translational modification Phosphoserine. The tract at residues 289-714 is disordered; it reads GELRRTKSKG…VGGTTYEISV (426 aa). The residue at position 294 (Thr-294) is a Phosphothreonine. Phosphoserine is present on residues Ser-296 and Ser-299. A Phosphothreonine modification is found at Thr-303. Ser-345 is modified (phosphoserine). Phosphothreonine is present on residues Thr-348 and Thr-350. The segment covering 359-373 has biased composition (low complexity); sequence SSSSASAAMPHSSSA. Residues Ser-380, Ser-398, Ser-406, and Ser-409 each carry the phosphoserine modification. Residues 388–398 are compositionally biased toward polar residues; it reads AESSRQPSYRS. Thr-411 carries the post-translational modification Phosphothreonine. A compositionally biased stretch (low complexity) spans 422-432; it reads SSGSRSSSLKS. Residues Ser-425, Ser-429, and Ser-432 each carry the phosphoserine modification. Thr-436 is subject to Phosphothreonine. Residues 445 to 478 are compositionally biased toward polar residues; sequence SIRSEGTTSTSYKSLANQTRNGSLSYDSLLTPSD. Residues Ser-529 and Ser-554 each carry the phosphoserine modification. Arg-616 bears the Omega-N-methylarginine mark. Ser-620 carries the phosphoserine modification. At Thr-658 the chain carries Phosphothreonine. Residues 667 to 678 show a composition bias toward polar residues; the sequence is TAYSKSNGQPKS. Residues 683 to 692 are compositionally biased toward pro residues; sequence PPGPGQPPLS. Ser-693 carries the phosphoserine modification. Residue Arg-696 is modified to Omega-N-methylarginine.

The protein belongs to the DHHC palmitoyltransferase family. ERF2/ZDHHC9 subfamily. In terms of processing, phosphorylation regulates association with endocytic proteins and its subcellular localization. Phosphorylation by LYN during fatty acid uptake leads to inactivation of the activity. Autopalmitoylated. Palmitoylation of the C-terminal tail regulates stimulation-dependent plasma membrane motility.

It localises to the cell membrane. The catalysed reaction is L-cysteinyl-[protein] + hexadecanoyl-CoA = S-hexadecanoyl-L-cysteinyl-[protein] + CoA. Its function is as follows. Palmitoyltransferase that catalyzes the addition of palmitate onto various protein substrates such as CTNND2, CD36, GSDMD, NLRP3, NOD1, NOD2, STAT3 and S1PR1 thus plays a role in various biological processes including cell adhesion, inflammation, fatty acid uptake, bacterial sensing or cardiac functions. Plays an important role in the regulation of synapse efficacy by mediating palmitoylation of delta-catenin/CTNND2, thereby increasing synaptic delivery and surface stabilization of alpha-amino-3-hydroxy-5-methyl-4-isoxazole propionic acid receptors (AMPARs). Under basal conditions, remains at the synaptic membrane through FYN-mediated phosphorylation that prevents association with endocytic proteins. Neuronal activity enhances the internalization and trafficking of DHHC5 from spines to dendritic shafts where it palmitoylates delta-catenin/CTNND2. Regulates cell adhesion at the plasma membrane by palmitoylating GOLGA7B and DSG2. Plays a role in innate immune response by mediating the palmitoylation of NOD1 and NOD2 and their proper recruitment to the bacterial entry site and phagosomes. Also participates in fatty acid uptake by palmitoylating CD36 and thereby targeting it to the plasma membrane. Upon binding of fatty acids to CD36, gets phosphorylated by LYN leading to inactivation and subsequent CD36 caveolar endocytosis. Controls oligodendrocyte development by catalyzing STAT3 palmitoylation. Acts as a regulator of inflammatory response by mediating palmitoylation of NLRP3 and GSDMD. Palmitoylates NLRP3 to promote inflammasome assembly and activation. Activates pyroptosis by catalyzing palmitoylation of gasdermin-D (GSDMD), thereby promoting membrane translocation and pore formation of GSDMD. This is Palmitoyltransferase ZDHHC5 (ZDHHC5) from Bos taurus (Bovine).